The sequence spans 155 residues: 6,7-dimethyl-8-ribityllumazine synthase (155 aa).

5-amino-6-(D-ribitylamino)uracil is bound by residues phenylalanine 24, 58-60, and 82-84; these read AFE and AII. (2S)-2-hydroxy-3-oxobutyl phosphate is bound at residue 87 to 88; it reads ST. Catalysis depends on histidine 90, which acts as the Proton donor. Residue phenylalanine 115 coordinates 5-amino-6-(D-ribitylamino)uracil. Position 129 (arginine 129) interacts with (2S)-2-hydroxy-3-oxobutyl phosphate.

This sequence belongs to the DMRL synthase family.

It catalyses the reaction (2S)-2-hydroxy-3-oxobutyl phosphate + 5-amino-6-(D-ribitylamino)uracil = 6,7-dimethyl-8-(1-D-ribityl)lumazine + phosphate + 2 H2O + H(+). It functions in the pathway cofactor biosynthesis; riboflavin biosynthesis; riboflavin from 2-hydroxy-3-oxobutyl phosphate and 5-amino-6-(D-ribitylamino)uracil: step 1/2. Its function is as follows. Catalyzes the formation of 6,7-dimethyl-8-ribityllumazine by condensation of 5-amino-6-(D-ribitylamino)uracil with 3,4-dihydroxy-2-butanone 4-phosphate. This is the penultimate step in the biosynthesis of riboflavin. The polypeptide is 6,7-dimethyl-8-ribityllumazine synthase (Chlorobium phaeovibrioides (strain DSM 265 / 1930) (Prosthecochloris vibrioformis (strain DSM 265))).